A 527-amino-acid chain; its full sequence is GMP synthase [glutamine-hydrolyzing] (527 aa).

A Glutamine amidotransferase type-1 domain is found at 19–212; that stretch reads KIIVLDYGSQ…AFSICGAKGD (194 aa). The Nucleophile role is filled by Cys-96. Residues His-186 and Glu-188 contribute to the active site. Positions 213–402 constitute a GMPS ATP-PPase domain; that stretch reads WSMANFVDMQ…LGMPDEVVWR (190 aa). 240 to 246 serves as a coordination point for ATP; the sequence is SGGVDSS.

As to quaternary structure, homodimer.

It carries out the reaction XMP + L-glutamine + ATP + H2O = GMP + L-glutamate + AMP + diphosphate + 2 H(+). Its pathway is purine metabolism; GMP biosynthesis; GMP from XMP (L-Gln route): step 1/1. Functionally, catalyzes the synthesis of GMP from XMP. This Streptococcus thermophilus (strain CNRZ 1066) protein is GMP synthase [glutamine-hydrolyzing].